The sequence spans 1131 residues: Translation initiation factor IF-2 (1131 aa).

Residues 49-542 (KFKGSVSSNE…AFIMPKPQQS (494 aa)) form a disordered region. The segment covering 60 to 75 (KSIDNGKASRVEKPEK) has biased composition (basic and acidic residues). Polar residues-rich tracts occupy residues 76–88 (NNSV…QTPS) and 108–125 (SEQN…NIQS). Over residues 127–138 (GDRKYQHTDRRP) the composition is skewed to basic and acidic residues. The span at 139–152 (QGNNGEGPQTSTNS) shows a compositional bias: polar residues. Basic and acidic residues-rich tracts occupy residues 164–180 (GDRR…RPYN) and 223–239 (GDRR…RPYN). Positions 411–436 (GQGGYGGRPQGQGSYGGRPQGQGGYA) are enriched in gly residues. 2 stretches are compositionally biased toward basic and acidic residues: residues 450–479 (KDFD…KSSI) and 487–530 (LTKE…DPNR). One can recognise a tr-type G domain in the interval 632–801 (KRPPVVCVMG…ILTAEMGELK (170 aa)). The segment at 641–648 (GHVDHGKT) is G1. 641 to 648 (GHVDHGKT) contributes to the GTP binding site. The G2 stretch occupies residues 666 to 670 (GITQH). Positions 687–690 (DTPG) are G3. GTP is bound by residues 687-691 (DTPGH) and 741-744 (NKID). Positions 741 to 744 (NKID) are G4. The interval 777–779 (SAH) is G5.

Belongs to the TRAFAC class translation factor GTPase superfamily. Classic translation factor GTPase family. IF-2 subfamily.

The protein resides in the cytoplasm. One of the essential components for the initiation of protein synthesis. Protects formylmethionyl-tRNA from spontaneous hydrolysis and promotes its binding to the 30S ribosomal subunits. Also involved in the hydrolysis of GTP during the formation of the 70S ribosomal complex. In Lachnoclostridium phytofermentans (strain ATCC 700394 / DSM 18823 / ISDg) (Clostridium phytofermentans), this protein is Translation initiation factor IF-2.